Consider the following 54-residue polypeptide: Phorbol-12-myristate-13-acetate-induced protein 1 (54 aa).

The short motif at 29-37 (LRRFGDKLN) is the BH3 element. Positions 41 to 50 (KLLNLISKLF) are required for mitochondrial location.

This sequence belongs to the PMAIP1 family. In terms of assembly, interacts with MCL1. Interacts with BCL2A1. Interacts with BAX. Interacts with BCL2L10. Highly expressed in adult T-cell leukemia cell line.

It is found in the mitochondrion. In terms of biological role, promotes activation of caspases and apoptosis. Promotes mitochondrial membrane changes and efflux of apoptogenic proteins from the mitochondria. Contributes to p53/TP53-dependent apoptosis after radiation exposure. Promotes proteasomal degradation of MCL1. Competes with BAK1 for binding to MCL1 and can displace BAK1 from its binding site on MCL1. Competes with BIM/BCL2L11 for binding to MCL1 and can displace BIM/BCL2L11 from its binding site on MCL1. This Homo sapiens (Human) protein is Phorbol-12-myristate-13-acetate-induced protein 1 (PMAIP1).